A 170-amino-acid chain; its full sequence is MPVSKQVIATEAITRKVDLDNPKVLAKLKKNMGHMTYGEPAWPNDLLFMFPVVILGTIGVIVGLAVMDPAGVGEPADPFATPLEILPEWYLYPAFHILRIAPNKLLGIALMSAIPVGLLFVPFIENVNKFQNPLRRPVATTVFLIGTLVTLYLGIGATLPLDKWVTLGLF.

3 consecutive transmembrane segments (helical) span residues L46–V66, L105–E125, and T141–L161.

This sequence belongs to the cytochrome b family. PetD subfamily. In terms of assembly, the 4 large subunits of the cytochrome b6-f complex are cytochrome b6, subunit IV (17 kDa polypeptide, PetD), cytochrome f and the Rieske protein, while the 4 small subunits are PetG, PetL, PetM and PetN. The complex functions as a dimer.

Its subcellular location is the cellular thylakoid membrane. Functionally, component of the cytochrome b6-f complex, which mediates electron transfer between photosystem II (PSII) and photosystem I (PSI), cyclic electron flow around PSI, and state transitions. This Synechococcus sp. (strain JA-3-3Ab) (Cyanobacteria bacterium Yellowstone A-Prime) protein is Cytochrome b6-f complex subunit 4.